Reading from the N-terminus, the 567-residue chain is Phosphoglucomutase-like protein 5 (567 aa).

Residues 1–26 (MEGSPIPVLTVPTAPYEDQRPAGGGG) are disordered. Thr-120 is modified (phosphothreonine). Ser-122 carries the phosphoserine modification.

It belongs to the phosphohexose mutase family. As to quaternary structure, interacts with DMD/dystrophin; the interaction is direct. Interacts with UTRN/utrophin. Detected in smooth and cardiac muscle at high levels and in skeletal muscle at low level. Present in other tissues due to vascular or other smooth muscle component. Low levels are present in liver, kidney, skin and brain (at protein level).

It is found in the cell junction. The protein localises to the adherens junction. Its subcellular location is the cytoplasm. It localises to the cytoskeleton. The protein resides in the cell membrane. It is found in the sarcolemma. Its function is as follows. Component of adherens-type cell-cell and cell-matrix junctions. Has no phosphoglucomutase activity in vitro. The chain is Phosphoglucomutase-like protein 5 from Homo sapiens (Human).